Consider the following 347-residue polypeptide: 4-hydroxy-2-oxovalerate aldolase (347 aa).

Positions 2–252 (ILISDATLRD…DTRTTFERVM (251 aa)) constitute a Pyruvate carboxyltransferase domain. Substrate is bound at residue 10 to 11 (RD). Aspartate 11 lines the Mn(2+) pocket. Residue histidine 14 is the Proton acceptor of the active site. The substrate site is built by serine 164 and histidine 191. 2 residues coordinate Mn(2+): histidine 191 and histidine 193.

Belongs to the 4-hydroxy-2-oxovalerate aldolase family.

The enzyme catalyses (S)-4-hydroxy-2-oxopentanoate = acetaldehyde + pyruvate. In Burkholderia pseudomallei (strain 1710b), this protein is 4-hydroxy-2-oxovalerate aldolase (mhpE).